A 146-amino-acid polypeptide reads, in one-letter code: MSCCKMEAPYPHAESDEKRIVFALDPKGDDAERDQYRLQLIPGRVLEMSRNDAANHQTLSGSIEQHTVEGWGAPFFHVKLAKEAAATLMQVHSEDHVEKSRKFVALSNTPLVPYTSRYPVVVYLPKDAELRYSIWCGGEQMQATTE.

This sequence belongs to the protease inhibitor I11 (ecotin) family.

The protein is Ecotin-like protein 1 (ISP1) of Leishmania braziliensis.